Here is a 483-residue protein sequence, read N- to C-terminus: ATP synthase subunit beta (483 aa).

Position 162–169 (162–169) interacts with ATP; it reads GGAGVGKT.

Belongs to the ATPase alpha/beta chains family. F-type ATPases have 2 components, CF(1) - the catalytic core - and CF(0) - the membrane proton channel. CF(1) has five subunits: alpha(3), beta(3), gamma(1), delta(1), epsilon(1). CF(0) has four main subunits: a(1), b(1), b'(1) and c(9-12).

The protein resides in the cellular thylakoid membrane. It carries out the reaction ATP + H2O + 4 H(+)(in) = ADP + phosphate + 5 H(+)(out). Its function is as follows. Produces ATP from ADP in the presence of a proton gradient across the membrane. The catalytic sites are hosted primarily by the beta subunits. The chain is ATP synthase subunit beta from Rippkaea orientalis (strain PCC 8801 / RF-1) (Cyanothece sp. (strain PCC 8801)).